The sequence spans 168 residues: Small ribosomal subunit protein uS5 (168 aa).

The S5 DRBM domain occupies 11 to 74; the sequence is YSEKVVKIDR…ESAKKHLVKI (64 aa).

Belongs to the universal ribosomal protein uS5 family. In terms of assembly, part of the 30S ribosomal subunit. Contacts proteins S4 and S8.

With S4 and S12 plays an important role in translational accuracy. Functionally, located at the back of the 30S subunit body where it stabilizes the conformation of the head with respect to the body. The chain is Small ribosomal subunit protein uS5 from Leptospira interrogans serogroup Icterohaemorrhagiae serovar copenhageni (strain Fiocruz L1-130).